A 282-amino-acid chain; its full sequence is Type 1 encapsulin shell protein (282 aa).

It belongs to the encapsulin family. Family 1 subfamily. As to quaternary structure, initially thought to form a 180 subunit shell. Forms hollow shells composed of 240 subunits, making a shell about 42-43 nm in diameter. The monomer is capable of assuming 4 different conformations which allows packaging into the icosahedron. The shell has 12 pentameric and 30 hexameric capsomers which form the vertices and faces of the icosahedral nanocompartment.

It localises to the encapsulin nanocompartment. Shell component of a type 1 encapsulin nanocompartment. Assembles into proteinaceous icosahedral shells 42-43 nm in diameter with an iron- and phosphorus-rich core (1Fe:1.1P) which can store over 23,000-35,000 iron atoms (with a calculated maximum of 83,000 Fe). There are 2 types of negatively charged open pores in the cryo-electron structure; a 3-fold pore where 3 hexamers meet with a minimal size of 7.2 Angstroms and a 5-fold pore where pentamers meet with a minimal size of 2.3 Angstroms. The 2-fold pore seen in other encapsulin nanocompartments is closed. Empty compartments can be generated in E.coli. Both types of pore have extra density in their centers in the structure. 2 different cargo proteins have been identified (IMEF and Fer); when both are expressed in E.coli with the shell protein only IMEF is detected within the nanocompartment. E.coli expressing all 3 genes stores the largest amount of iron and is protected from Fe/H2O2-induced oxidative stress. Part of the iron-mineralizing encapsulin-associated Firmicute (IMEF) system. In Bacillus thermotolerans (Quasibacillus thermotolerans), this protein is Type 1 encapsulin shell protein.